An 87-amino-acid chain; its full sequence is Small ribosomal subunit protein uS17 (87 aa).

This sequence belongs to the universal ribosomal protein uS17 family. In terms of assembly, part of the 30S ribosomal subunit.

Functionally, one of the primary rRNA binding proteins, it binds specifically to the 5'-end of 16S ribosomal RNA. In Staphylococcus aureus (strain Mu3 / ATCC 700698), this protein is Small ribosomal subunit protein uS17.